The chain runs to 759 residues: Phosphoribosylformylglycinamidine synthase subunit PurL (759 aa).

The active site involves His46. ATP is bound by residues Tyr49 and Lys88. Position 90 (Glu90) interacts with Mg(2+). Substrate is bound by residues 91-94 (SHNH) and Arg113. The Proton acceptor role is filled by His92. Position 114 (Asp114) interacts with Mg(2+). Residue Gln237 participates in substrate binding. Asp265 provides a ligand contact to Mg(2+). Position 309–311 (309–311 (ESQ)) interacts with substrate. The ATP site is built by Asp498 and Gly535. Asn536 serves as a coordination point for Mg(2+). Substrate is bound at residue Ser538.

Belongs to the FGAMS family. Monomer. Part of the FGAM synthase complex composed of 1 PurL, 1 PurQ and 2 PurS subunits.

It localises to the cytoplasm. The enzyme catalyses N(2)-formyl-N(1)-(5-phospho-beta-D-ribosyl)glycinamide + L-glutamine + ATP + H2O = 2-formamido-N(1)-(5-O-phospho-beta-D-ribosyl)acetamidine + L-glutamate + ADP + phosphate + H(+). The protein operates within purine metabolism; IMP biosynthesis via de novo pathway; 5-amino-1-(5-phospho-D-ribosyl)imidazole from N(2)-formyl-N(1)-(5-phospho-D-ribosyl)glycinamide: step 1/2. Its function is as follows. Part of the phosphoribosylformylglycinamidine synthase complex involved in the purines biosynthetic pathway. Catalyzes the ATP-dependent conversion of formylglycinamide ribonucleotide (FGAR) and glutamine to yield formylglycinamidine ribonucleotide (FGAM) and glutamate. The FGAM synthase complex is composed of three subunits. PurQ produces an ammonia molecule by converting glutamine to glutamate. PurL transfers the ammonia molecule to FGAR to form FGAM in an ATP-dependent manner. PurS interacts with PurQ and PurL and is thought to assist in the transfer of the ammonia molecule from PurQ to PurL. This is Phosphoribosylformylglycinamidine synthase subunit PurL from Anaeromyxobacter dehalogenans (strain 2CP-C).